The sequence spans 318 residues: L-lactate dehydrogenase (318 aa).

Residues Val18, Asp39, Lys44, Tyr69, and 83-84 (GA) contribute to the NAD(+) site. Gln86 and Arg92 together coordinate substrate. Residues Ser105, 122–124 (VSN), and Ser147 each bind NAD(+). 124-127 (NPVD) provides a ligand contact to substrate. Position 152 to 155 (152 to 155 (DTSR)) interacts with substrate. His179 acts as the Proton acceptor in catalysis. Phosphotyrosine is present on Tyr225. Thr234 provides a ligand contact to substrate.

This sequence belongs to the LDH/MDH superfamily. LDH family. In terms of assembly, homotetramer.

It is found in the cytoplasm. It catalyses the reaction (S)-lactate + NAD(+) = pyruvate + NADH + H(+). Its pathway is fermentation; pyruvate fermentation to lactate; (S)-lactate from pyruvate: step 1/1. Functionally, catalyzes the conversion of lactate to pyruvate. This chain is L-lactate dehydrogenase, found in Clostridium botulinum (strain 657 / Type Ba4).